The chain runs to 255 residues: Flap endonuclease Xni (255 aa).

Position 105 (aspartate 105) interacts with Mg(2+). The 5'-3' exonuclease domain occupies 163–253 (QYQMLDFIAL…NLKQFRINPI (91 aa)). Leucine 172, alanine 173, proline 181, isoleucine 183, and isoleucine 186 together coordinate K(+). The interval 185–190 (GIGPKS) is interaction with DNA.

The protein belongs to the Xni family. Mg(2+) serves as cofactor. The cofactor is K(+).

In terms of biological role, has flap endonuclease activity. During DNA replication, flap endonucleases cleave the 5'-overhanging flap structure that is generated by displacement synthesis when DNA polymerase encounters the 5'-end of a downstream Okazaki fragment. The chain is Flap endonuclease Xni from Shewanella frigidimarina (strain NCIMB 400).